A 273-amino-acid polypeptide reads, in one-letter code: 2,3,4,5-tetrahydropyridine-2,6-dicarboxylate N-succinyltransferase (273 aa).

Substrate is bound by residues R104 and D141.

The protein belongs to the transferase hexapeptide repeat family. As to quaternary structure, homotrimer.

It is found in the cytoplasm. It catalyses the reaction (S)-2,3,4,5-tetrahydrodipicolinate + succinyl-CoA + H2O = (S)-2-succinylamino-6-oxoheptanedioate + CoA. It functions in the pathway amino-acid biosynthesis; L-lysine biosynthesis via DAP pathway; LL-2,6-diaminopimelate from (S)-tetrahydrodipicolinate (succinylase route): step 1/3. The protein is 2,3,4,5-tetrahydropyridine-2,6-dicarboxylate N-succinyltransferase of Laribacter hongkongensis (strain HLHK9).